Here is a 607-residue protein sequence, read N- to C-terminus: UvrABC system protein C (607 aa).

One can recognise a GIY-YIG domain in the interval 29-106; that stretch reads DKPGVYLMKD…IKKHNPKYNI (78 aa). Residues 211–246 form the UVR domain; sequence GAILKALEKKMKEASENLEFERAKEYRDLMEDLKKV.

This sequence belongs to the UvrC family. In terms of assembly, interacts with UvrB in an incision complex.

It is found in the cytoplasm. Its function is as follows. The UvrABC repair system catalyzes the recognition and processing of DNA lesions. UvrC both incises the 5' and 3' sides of the lesion. The N-terminal half is responsible for the 3' incision and the C-terminal half is responsible for the 5' incision. In Desulfitobacterium hafniense (strain Y51), this protein is UvrABC system protein C.